Here is a 142-residue protein sequence, read N- to C-terminus: SLETGRYLIHNGNNIVSRNLAEDRSLNPKRIVLLEPTDKIQLTWIIEKSGDEYILNNRGAPTAHIEDHVFALLIHQEGATKWSIEAVPRHGRNAYIIKGSDGKGWVAPDKAGEQIIYRTLIVGPSEPPTFPLNQVFQIIKLE.

S1 carries the N-acetylserine modification.

Its function is as follows. Serine protease inhibitor. Active against beta-trypsin and alpha-chymotrypsin with dissociation constants of 0.35 nM and 40 nM respectively. Inhibits factor XIa, but not other enzymes involved in coagulation and fibrinolysis. Does not inhibit subtilisin, lysyl endopeptidase, arginyl endopeptidase or papain. The chain is Serine protease inhibitor from Lentinula edodes (Shiitake mushroom).